A 91-amino-acid polypeptide reads, in one-letter code: Large ribosomal subunit protein uL23c (91 aa).

The protein belongs to the universal ribosomal protein uL23 family. As to quaternary structure, part of the 50S ribosomal subunit.

The protein localises to the plastid. It is found in the chloroplast. In terms of biological role, binds to 23S rRNA. The chain is Large ribosomal subunit protein uL23c (rpl23) from Picea abies (Norway spruce).